Consider the following 287-residue polypeptide: 4-hydroxybenzoate octaprenyltransferase (287 aa).

A run of 5 helical transmembrane segments spans residues 20–38 (IGTLLLMWPCLMALWFAAG), 95–115 (IVFLVMALFAFCLVLLLNPLV), 211–231 (IIAAFQFAALACFIIAGLIAE), 235–255 (IYGGGILAFIGFALYQQKLIF), and 266–286 (FLNNNWAGMALFIALGLDYLV).

Belongs to the UbiA prenyltransferase family. Requires Mg(2+) as cofactor.

Its subcellular location is the cell inner membrane. The catalysed reaction is all-trans-octaprenyl diphosphate + 4-hydroxybenzoate = 4-hydroxy-3-(all-trans-octaprenyl)benzoate + diphosphate. It participates in cofactor biosynthesis; ubiquinone biosynthesis. Its function is as follows. Catalyzes the prenylation of para-hydroxybenzoate (PHB) with an all-trans polyprenyl group. Mediates the second step in the final reaction sequence of ubiquinone-8 (UQ-8) biosynthesis, which is the condensation of the polyisoprenoid side chain with PHB, generating the first membrane-bound Q intermediate 3-octaprenyl-4-hydroxybenzoate. This Shewanella piezotolerans (strain WP3 / JCM 13877) protein is 4-hydroxybenzoate octaprenyltransferase.